A 383-amino-acid polypeptide reads, in one-letter code: 8-amino-7-oxononanoate synthase (383 aa).

Residue R21 coordinates substrate. 108–109 (GY) contacts pyridoxal 5'-phosphate. H133 contacts substrate. Pyridoxal 5'-phosphate is bound by residues S179, H207, and T233. An N6-(pyridoxal phosphate)lysine modification is found at K236. Residue T350 coordinates substrate.

It belongs to the class-II pyridoxal-phosphate-dependent aminotransferase family. BioF subfamily. Homodimer. Pyridoxal 5'-phosphate is required as a cofactor.

It carries out the reaction 6-carboxyhexanoyl-[ACP] + L-alanine + H(+) = (8S)-8-amino-7-oxononanoate + holo-[ACP] + CO2. It functions in the pathway cofactor biosynthesis; biotin biosynthesis. Its function is as follows. Catalyzes the decarboxylative condensation of pimeloyl-[acyl-carrier protein] and L-alanine to produce 8-amino-7-oxononanoate (AON), [acyl-carrier protein], and carbon dioxide. The protein is 8-amino-7-oxononanoate synthase of Yersinia pseudotuberculosis serotype O:1b (strain IP 31758).